A 216-amino-acid polypeptide reads, in one-letter code: Cell envelope integrity protein Cei (216 aa).

Residues Pro25–Leu45 traverse the membrane as a helical segment.

It localises to the cell membrane. Functionally, contributes to cell envelope integrity and virulence. This is Cell envelope integrity protein Cei from Mycobacterium tuberculosis (strain ATCC 25618 / H37Rv).